The sequence spans 255 residues: Hydroxyacylglutathione hydrolase (255 aa).

Zn(2+) contacts are provided by His55, His57, Asp59, His60, His113, Asp132, and His170.

This sequence belongs to the metallo-beta-lactamase superfamily. Glyoxalase II family. Monomer. It depends on Zn(2+) as a cofactor.

It catalyses the reaction an S-(2-hydroxyacyl)glutathione + H2O = a 2-hydroxy carboxylate + glutathione + H(+). It participates in secondary metabolite metabolism; methylglyoxal degradation; (R)-lactate from methylglyoxal: step 2/2. In terms of biological role, thiolesterase that catalyzes the hydrolysis of S-D-lactoyl-glutathione to form glutathione and D-lactic acid. In Methylobacterium sp. (strain 4-46), this protein is Hydroxyacylglutathione hydrolase.